The sequence spans 465 residues: MAKKMPDIGEYKYGFHDKDVSIFRSERGLTKEIVEEISRMKEEPQWMLDFRLKSLEHFYNMPMPQWGGDLNSLNFDEITYYVKPSERSERSWDEVPEEIKQTFDKLGIPEAEQKYLAGVSAQYESEVVYHNMKEDLEAQGIVFKDTDSALKENEDIFREHWAKVIPPTDNKFAALNSAVWSGGSFIYVPKGVKVETPLQAYFRINSENMGQFERTLIIVDEEASVHYVEGCTAPVYTTNSLHSAVVEIIVKKGGYCRYTTIQNWANNVYNLVTKRTVCEENATMEWIDGNIGSKLTMKYPACILKGEGARGMTLSIALAGKGQHQDAGAKMIHLAPNTSSTIVSKSISKQGGKVTYRGIVHFGRKAEGARSNIECDTLIMDNKSTSDTIPYNEILNDNISLEHEAKVSKVSEEQLFYLMSRGISEEEATEMIVMGFIEPFTKELPMEYAVEMNRLIKFEMEGSIG.

The protein belongs to the iron-sulfur cluster assembly SufBD family. Part of the SufBCD complex that contains SufB, SufC and SufD.

In terms of biological role, the SufBCD complex acts synergistically with SufE to stimulate the cysteine desulfurase activity of SufS. The SufBCD complex contributes to the assembly or repair of oxygen-labile iron-sulfur clusters under oxidative stress. May facilitate iron uptake from extracellular iron chelators under iron limitation. This is Iron-sulfur cluster assembly protein SufB (sufB) from Bacillus subtilis (strain 168).